A 472-amino-acid chain; its full sequence is Coenzyme F(430) synthetase (472 aa).

119–125 (GVKAKTS) is a binding site for ATP.

It belongs to the MurCDEF family.

The enzyme catalyses 15,17(3)-seco-F430-17(3)-acid + ATP = coenzyme F430 + ADP + phosphate. Its function is as follows. Involved in the biosynthesis of the unique nickel-containing tetrapyrrole coenzyme F430, the prosthetic group of methyl-coenzyme M reductase (MCR), which plays a key role in methanogenesis and anaerobic methane oxidation. Catalyzes the activation the g-propionate side chain of 15,17(3)-seco-F430-17(3)-acid (seco-F430) for intramolecular C-C bond formation to yield the carbocyclic F ring of coenzyme F430. The chain is Coenzyme F(430) synthetase from Methanosarcina acetivorans (strain ATCC 35395 / DSM 2834 / JCM 12185 / C2A).